The chain runs to 473 residues: Phosphatidylserine synthase 2 (473 aa).

The interval 1–25 (MRRGERRVAGGSGSESPLLKGRRST) is disordered. The Cytoplasmic portion of the chain corresponds to 1–40 (MRRGERRVAGGSGSESPLLKGRRSTESEVYDDGTNTFFWR). Residues Ser12, Ser14, and Ser16 each carry the phosphoserine modification. Residues 41–61 (AHTLTVLFILTCALGYVTLLE) traverse the membrane as a helical segment. Topologically, residues 62-74 (ETPQDTAYNTKRG) are lumenal. The chain crosses the membrane as a helical span at residues 75-95 (IVASILVFLCFGVTQAKDGPF). At 96–104 (SRPHPAYWR) the chain is on the cytoplasmic side. The helical transmembrane segment at 105–125 (FWLCVSVVYELFLIFILFQTV) threads the bilayer. Topologically, residues 126-291 (QDGRQFLKYV…EWKPASSLHR (166 aa)) are lumenal. Residue Asn159 is glycosylated (N-linked (GlcNAc...) asparagine). A helical transmembrane segment spans residues 292–312 (WLAVCGIILVFLLAELNTFYL). Lys313 is a topological domain (cytoplasmic). A helical membrane pass occupies residues 314 to 334 (FVLWMPPEHYLVLLRLVFFVN). Residues 335 to 354 (VGGVAMREIYDFMDELKPHR) lie on the Lumenal side of the membrane. Residues 355-375 (KLGQQAWLVAAITVTELLIVV) form a helical membrane-spanning segment. The Cytoplasmic segment spans residues 376–381 (KYDPHT). The helical transmembrane segment at 382–402 (LTLSLPFYISQCWTLGSILVL) threads the bilayer. At 403–473 (TWTVWRFFLR…TAEEGTSAAS (71 aa)) the chain is on the lumenal side. The tract at residues 422 to 473 (RRQKQQSHQARAVNNRDGHPGPDDDLLGTGTAEEEGTTNDGVTAEEGTSAAS) is disordered.

The protein belongs to the phosphatidyl serine synthase family. In terms of tissue distribution, highly expressed in testis. Detected at lower levels in kidney and heart.

It is found in the endoplasmic reticulum membrane. Its subcellular location is the membrane. It carries out the reaction a 1,2-diacyl-sn-glycero-3-phosphoethanolamine + L-serine = a 1,2-diacyl-sn-glycero-3-phospho-L-serine + ethanolamine. It catalyses the reaction 1-hexadecanoyl-2-(9Z-octadecenoyl)-sn-glycero-3-phosphoethanolamine + L-serine = 1-hexadecanoyl-2-(9Z-octadecenoyl)-sn-glycero-3-phospho-L-serine + ethanolamine. The catalysed reaction is 1-hexadecanoyl-2-(4Z,7Z,10Z,13Z,16Z,19Z-docosahexaenoyl)-sn-glycero-3-phosphoethanolamine + L-serine = 1-hexadecanoyl-2-(4Z,7Z,10Z,13Z,16Z,19Z-docosahexaenoyl)-sn-glycero-3-phosphoserine + ethanolamine. The enzyme catalyses 1-octadecanoyl-2-(5Z,8Z,11Z,14Z)-eicosatetraenoyl-sn-glycero-3-phosphoethanolamine + L-serine = 1-octadecanoyl-2-(5Z,8Z,11Z,14Z)-eicosatetraenoyl-sn-glycero-3-phosphoserine + ethanolamine. It carries out the reaction 1-octadecanoyl-2-(4Z,7Z,10Z,13Z,16Z,19Z-docosahexaenoyl)-sn-glycero-3-phosphoethanolamine + L-serine = 1-octadecanoyl-2-(4Z,7Z,10Z,13Z,16Z,19Z-docosahexaenoyl)-sn-glycero-3-phosphoserine + ethanolamine. It catalyses the reaction 1-(1Z-octadecenyl)-2-(4Z,7Z,10Z,13Z,16Z,19Z-docosahexaenoyl)-sn-glycero-3-phosphoethanolamine + L-serine = 1-(1Z-octadecenyl)-2-(4Z,7Z,10Z,13Z,16Z,19Z-docosahexaenoyl)-sn-glycero-3-phospho-L-serine + ethanolamine. The catalysed reaction is 1-octadecanoyl-2-(9Z-octadecenoyl)-sn-glycero-3-phosphoethanolamine + L-serine = 1-octadecanoyl-2-(9Z-octadecenoyl)-sn-glycero-3-phospho-L-serine + ethanolamine. The enzyme catalyses 1-(1Z-octadecenyl)-2-(9Z-octadecenoyl)-sn-glycero-3-phosphoethanolamine + L-serine = 1-(1Z-octadecenyl)-2-(9Z-octadecenoyl)-sn-glycero-3-phospho-L-serine + ethanolamine. It carries out the reaction 1-(1Z-octadecenyl)-2-(5Z,8Z,11Z,14Z- eicosatetraenoyl)-sn-glycero-3-phosphoethanolamine + L-serine = 1-(1Z-octadecenyl)-2-(5Z,8Z,11Z,14Z-eicosatetraenoyl)-sn-glycero-3-phospho-L-serine + ethanolamine. It functions in the pathway phospholipid metabolism; phosphatidylserine biosynthesis. Almost complete inhibition by ethanolamine in both the mitochondria-associated membrane (MAM) and endoplasmic reticulum (ER) per se. In terms of biological role, catalyzes a base-exchange reaction in which the polar head group of phosphatidylethanolamine (PE) or phosphatidylcholine (PC) is replaced by L-serine. Catalyzes the conversion of phosphatatidylethanolamine and does not act on phosphatidylcholine. Can utilize both phosphatidylethanolamine (PE) plasmalogen and diacyl PE as substrate and the latter is six times better utilized, indicating the importance of an ester linkage at the sn-1 position. Although it shows no sn-1 fatty acyl preference, exhibits significant preference towards docosahexaenoic acid (22:6n-3) compared with 18:1 or 20:4 at the sn-2 position. The protein is Phosphatidylserine synthase 2 (Ptdss2) of Mus musculus (Mouse).